The chain runs to 131 residues: D-ribose pyranase (131 aa).

Catalysis depends on H20, which acts as the Proton donor. Residues D28, H98, and 120–122 (YSN) each bind substrate.

The protein belongs to the RbsD / FucU family. RbsD subfamily. As to quaternary structure, homodecamer.

It is found in the cytoplasm. The enzyme catalyses beta-D-ribopyranose = beta-D-ribofuranose. It functions in the pathway carbohydrate metabolism; D-ribose degradation; D-ribose 5-phosphate from beta-D-ribopyranose: step 1/2. Functionally, catalyzes the interconversion of beta-pyran and beta-furan forms of D-ribose. The sequence is that of D-ribose pyranase from Limosilactobacillus reuteri (strain DSM 20016) (Lactobacillus reuteri).